Consider the following 599-residue polypeptide: THO complex subunit 1 (599 aa).

Disordered stretches follow at residues 376 to 395 (EKQP…RRQR) and 497 to 599 (KYQA…MPVS). The span at 502-522 (PNEKAKRAKKEETKGGSHETE) shows a compositional bias: basic and acidic residues. Residues 575 to 585 (QIEDGETEEAG) show a composition bias toward acidic residues.

In terms of assembly, component of the THO complex, which is composed of THO1, THO2, THO3, THO5, THO6 and THO7.

Its subcellular location is the nucleus. Its function is as follows. Acts as a component of the THO subcomplex of the TREX complex which is thought to couple mRNA transcription, processing and nuclear export. Contributes to the integrity of the endogenous trans-acting small interfering RNA (ta-siRNA) pathway. May process or transport a long RNA molecule so that it can be a template for secondary siRNA production. May participate in the trafficking of siRNA precursors to the ARGONAUTE catalytic center. Required for the generation of functional messenger ribonucleoproteins (mRNPs). Plays an important roles in plant innate immunity. This Arabidopsis thaliana (Mouse-ear cress) protein is THO complex subunit 1 (THO1).